Reading from the N-terminus, the 158-residue chain is NAD(P)H-quinone oxidoreductase subunit J, chloroplastic (158 aa).

This sequence belongs to the complex I 30 kDa subunit family. NDH is composed of at least 16 different subunits, 5 of which are encoded in the nucleus.

The protein localises to the plastid. Its subcellular location is the chloroplast thylakoid membrane. It carries out the reaction a plastoquinone + NADH + (n+1) H(+)(in) = a plastoquinol + NAD(+) + n H(+)(out). It catalyses the reaction a plastoquinone + NADPH + (n+1) H(+)(in) = a plastoquinol + NADP(+) + n H(+)(out). In terms of biological role, NDH shuttles electrons from NAD(P)H:plastoquinone, via FMN and iron-sulfur (Fe-S) centers, to quinones in the photosynthetic chain and possibly in a chloroplast respiratory chain. The immediate electron acceptor for the enzyme in this species is believed to be plastoquinone. Couples the redox reaction to proton translocation, and thus conserves the redox energy in a proton gradient. This Eucalyptus globulus subsp. globulus (Tasmanian blue gum) protein is NAD(P)H-quinone oxidoreductase subunit J, chloroplastic.